The sequence spans 626 residues: tRNA uridine 5-carboxymethylaminomethyl modification enzyme MnmG (626 aa).

FAD is bound at residue 13–18 (GGGHAG). 273–287 (GPRYCPSIEDKIHRF) lines the NAD(+) pocket.

Belongs to the MnmG family. In terms of assembly, homodimer. Heterotetramer of two MnmE and two MnmG subunits. FAD is required as a cofactor.

Its subcellular location is the cytoplasm. In terms of biological role, NAD-binding protein involved in the addition of a carboxymethylaminomethyl (cmnm) group at the wobble position (U34) of certain tRNAs, forming tRNA-cmnm(5)s(2)U34. The polypeptide is tRNA uridine 5-carboxymethylaminomethyl modification enzyme MnmG (Acinetobacter baumannii (strain ATCC 17978 / DSM 105126 / CIP 53.77 / LMG 1025 / NCDC KC755 / 5377)).